The chain runs to 384 residues: MTKPATTPAILALADGSIFRGESIGADGQTIGEVVFNTAMTGYQEILTDPSYAKQIVTLTYPHVGNTGTTPQDAESWKVWAAGLVIRDLPLLASNWRNKQSLPDYLKENDTVAIAGIDTRRLTRILREKGAQNGCILAGADATEEKALELARSFPGLKGMDLAKEVSVKERYEWRYSLWNLETDSHPEIPASELPYHVVAYDYGVKYNILRMLVARGCRVTVLPAQTPASEALALNPDGIFLANGPGDPEPCDYAIRAIQEVLETDIPVFGICLGHQLLALASGAITVKMPSGHHGANHPVQDLETGVVMITSQNHGFCADEASLPANLRATHKSLFDGTLQGIERTDKVAFGFQGHPEASPGPCDVAPLFDRFISAMAPVVDR.

The CPSase stretch occupies residues 1-193; that stretch reads MTKPATTPAI…DSHPEIPASE (193 aa). 3 residues coordinate L-glutamine: Ser51, Gly245, and Gly247. One can recognise a Glutamine amidotransferase type-1 domain in the interval 197–384; that stretch reads HVVAYDYGVK…ISAMAPVVDR (188 aa). Residue Cys273 is the Nucleophile of the active site. 5 residues coordinate L-glutamine: Leu274, Gln277, Asn315, Gly317, and Phe318. Active-site residues include His357 and Glu359.

It belongs to the CarA family. Composed of two chains; the small (or glutamine) chain promotes the hydrolysis of glutamine to ammonia, which is used by the large (or ammonia) chain to synthesize carbamoyl phosphate. Tetramer of heterodimers (alpha,beta)4.

It carries out the reaction hydrogencarbonate + L-glutamine + 2 ATP + H2O = carbamoyl phosphate + L-glutamate + 2 ADP + phosphate + 2 H(+). It catalyses the reaction L-glutamine + H2O = L-glutamate + NH4(+). It participates in amino-acid biosynthesis; L-arginine biosynthesis; carbamoyl phosphate from bicarbonate: step 1/1. The protein operates within pyrimidine metabolism; UMP biosynthesis via de novo pathway; (S)-dihydroorotate from bicarbonate: step 1/3. Functionally, small subunit of the glutamine-dependent carbamoyl phosphate synthetase (CPSase). CPSase catalyzes the formation of carbamoyl phosphate from the ammonia moiety of glutamine, carbonate, and phosphate donated by ATP, constituting the first step of 2 biosynthetic pathways, one leading to arginine and/or urea and the other to pyrimidine nucleotides. The small subunit (glutamine amidotransferase) binds and cleaves glutamine to supply the large subunit with the substrate ammonia. This Stutzerimonas stutzeri (Pseudomonas stutzeri) protein is Carbamoyl phosphate synthase small chain.